A 520-amino-acid polypeptide reads, in one-letter code: Glucose-6-phosphate isomerase (520 aa).

The active-site Proton donor is the Glu327. Active-site residues include His358 and Lys486.

Belongs to the GPI family.

Its subcellular location is the cytoplasm. The enzyme catalyses alpha-D-glucose 6-phosphate = beta-D-fructose 6-phosphate. It functions in the pathway carbohydrate biosynthesis; gluconeogenesis. Its pathway is carbohydrate degradation; glycolysis; D-glyceraldehyde 3-phosphate and glycerone phosphate from D-glucose: step 2/4. Catalyzes the reversible isomerization of glucose-6-phosphate to fructose-6-phosphate. The chain is Glucose-6-phosphate isomerase from Bordetella avium (strain 197N).